A 990-amino-acid chain; its full sequence is Bifunctional glutamine synthetase adenylyltransferase/adenylyl-removing enzyme (990 aa).

Residues 1-474 (MIFSAITADL…HYAKLFEGDP (474 aa)) are adenylyl removase. Residues 478–990 (AKLPPVDYGA…FNRLIGGEDA (513 aa)) are adenylyl transferase.

The protein belongs to the GlnE family. It depends on Mg(2+) as a cofactor.

The enzyme catalyses [glutamine synthetase]-O(4)-(5'-adenylyl)-L-tyrosine + phosphate = [glutamine synthetase]-L-tyrosine + ADP. The catalysed reaction is [glutamine synthetase]-L-tyrosine + ATP = [glutamine synthetase]-O(4)-(5'-adenylyl)-L-tyrosine + diphosphate. In terms of biological role, involved in the regulation of glutamine synthetase GlnA, a key enzyme in the process to assimilate ammonia. When cellular nitrogen levels are high, the C-terminal adenylyl transferase (AT) inactivates GlnA by covalent transfer of an adenylyl group from ATP to specific tyrosine residue of GlnA, thus reducing its activity. Conversely, when nitrogen levels are low, the N-terminal adenylyl removase (AR) activates GlnA by removing the adenylyl group by phosphorolysis, increasing its activity. The regulatory region of GlnE binds the signal transduction protein PII (GlnB) which indicates the nitrogen status of the cell. The chain is Bifunctional glutamine synthetase adenylyltransferase/adenylyl-removing enzyme from Rhodopseudomonas palustris (strain TIE-1).